Here is a 173-residue protein sequence, read N- to C-terminus: Protein GrpE (173 aa).

A compositionally biased stretch (basic and acidic residues) spans 1–20 (MQDEFKTDTPRTEAGSEKET). A disordered region spans residues 1 to 23 (MQDEFKTDTPRTEAGSEKETMPS).

Belongs to the GrpE family. As to quaternary structure, homodimer.

It is found in the cytoplasm. Functionally, participates actively in the response to hyperosmotic and heat shock by preventing the aggregation of stress-denatured proteins, in association with DnaK and GrpE. It is the nucleotide exchange factor for DnaK and may function as a thermosensor. Unfolded proteins bind initially to DnaJ; upon interaction with the DnaJ-bound protein, DnaK hydrolyzes its bound ATP, resulting in the formation of a stable complex. GrpE releases ADP from DnaK; ATP binding to DnaK triggers the release of the substrate protein, thus completing the reaction cycle. Several rounds of ATP-dependent interactions between DnaJ, DnaK and GrpE are required for fully efficient folding. The sequence is that of Protein GrpE from Thiobacillus denitrificans (strain ATCC 25259 / T1).